We begin with the raw amino-acid sequence, 427 residues long: MRKCKIFVGNSHPELGNMVCQRLGIEPAPCTLKKFANGETSVQIGVSVRDEDVYVIQSGSPSINDDIMELLILVSACRGGSARKITAVIPQFPYSKQCKMKRHRGAITARMLANLLVMAGADHVVSMDLHASQMQGFFTKPVDNLYGGPSLAKWIRENVEDYEDAVVVSKNPGGTKRVTALADSLKINFAMIHTDRRRSKDLYSQNKDLQQLKLRKQSMLRKNRPIIRQGDHPNEEENIILSNGIQTARIRNGHVIGDDEADDDEDAILESDSELHSIDGLDSHGLGGTYDAVDSEDEEEIPVLYREQLITLVGNVRGRSAIILDDMIDRPGSFISAAEHLVQNCGAKKVYVVATHGIFTGDCLEELEKSDAIDTIVVTNTYPISGERIAGSKKLVTIDVSPIFAECIRRDHYGESISVLFDSLAAL.

Positions 128, 130, and 143 each coordinate Mg(2+). Phosphoserine is present on residues Ser199, Ser218, Ser271, and Ser295.

Belongs to the ribose-phosphate pyrophosphokinase family.

The protein resides in the cytoplasm. The catalysed reaction is D-ribose 5-phosphate + ATP = 5-phospho-alpha-D-ribose 1-diphosphate + AMP + H(+). The protein operates within metabolic intermediate biosynthesis; 5-phospho-alpha-D-ribose 1-diphosphate biosynthesis; 5-phospho-alpha-D-ribose 1-diphosphate from D-ribose 5-phosphate (route I): step 1/1. In terms of biological role, 5-phosphoribose 1-diphosphate synthase involved in nucleotide, histidine, and tryptophan biosynthesis. Active in heteromultimeric complexes with other 5-phosphoribose 1-diphosphate synthases (PRS2, PRS3, PRS4 and PRS5). The polypeptide is Ribose-phosphate pyrophosphokinase 1 (PRS1) (Saccharomyces cerevisiae (strain ATCC 204508 / S288c) (Baker's yeast)).